Consider the following 314-residue polypeptide: Lysophospholipase D GDPD1 (314 aa).

Topologically, residues 1–3 (MSS) are extracellular. Residues 4-24 (TAAFCLLSTLGGYLVTSFLLL) traverse the membrane as a helical segment. Residues 25-195 (KYPALLHQRK…VDKCYKENSD (171 aa)) lie on the Cytoplasmic side of the membrane. The 270-residue stretch at 40-309 (SRHISHRGGA…DYPTKLKEFL (270 aa)) folds into the GP-PDE domain. A divalent metal cation contacts are provided by glutamate 72, aspartate 74, and histidine 87. Residues 196–216 (IPILFSLQRVLLILGLFFTGL) traverse the membrane as a helical segment. Residues 217–314 (LPFVPIREQF…LKEFLNNMSA (98 aa)) lie on the Extracellular side of the membrane.

This sequence belongs to the glycerophosphoryl diester phosphodiesterase family.

It is found in the cytoplasm. Its subcellular location is the membrane. The protein localises to the perinuclear region. It localises to the endoplasmic reticulum. The catalysed reaction is a 1-O-alkyl-sn-glycero-3-phosphocholine + H2O = a 1-O-alkyl-sn-glycero-3-phosphate + choline + H(+). It carries out the reaction 1-hexadecanoyl-sn-glycero-3-phosphocholine + H2O = 1-hexadecanoyl-sn-glycero-3-phosphate + choline + H(+). The enzyme catalyses 1-hexadecanoyl-sn-glycero-3-phosphoethanolamine + H2O = 1-hexadecanoyl-sn-glycero-3-phosphate + ethanolamine + H(+). It catalyses the reaction N-hexadecanoyl-sn-glycero-3-phosphoethanolamine + H2O = N-hexadecanoylethanolamine + sn-glycerol 3-phosphate + H(+). The catalysed reaction is N-(5Z,8Z,11Z,14Z-eicosatetraenoyl)-1-(9Z-octadecenoyl)-sn-glycero-3-phosphoethanolamine + H2O = N-(5Z,8Z,11Z,14Z-eicosatetraenoyl)-ethanolamine + 1-(9Z-octadecenoyl)-sn-glycero-3-phosphate + H(+). It carries out the reaction N,1-di-(9Z-octadecenoyl)-sn-glycero-3-phosphoethanolamine + H2O = N-(9Z-octadecenoyl) ethanolamine + 1-(9Z-octadecenoyl)-sn-glycero-3-phosphate + H(+). The enzyme catalyses N-hexadecanoyl-1-(9Z-octadecenoyl)-sn-glycero-3-phosphoethanolamine + H2O = N-hexadecanoylethanolamine + 1-(9Z-octadecenoyl)-sn-glycero-3-phosphate + H(+). It catalyses the reaction 1-O-hexadecyl-sn-glycero-3-phosphocholine + H2O = 1-O-hexadecyl-sn-glycero-3-phosphate + choline + H(+). The catalysed reaction is 1-(9Z-octadecenoyl)-sn-glycero-3-phosphocholine + H2O = 1-(9Z-octadecenoyl)-sn-glycero-3-phosphate + choline + H(+). It carries out the reaction N,1-dihexadecanoyl-sn-glycero-3-phosphoethanolamine + H2O = N-hexadecanoylethanolamine + 1-hexadecanoyl-sn-glycero-3-phosphate + H(+). The enzyme catalyses 1-O-(1Z-octadecenyl)-sn-glycero-3-phospho-(N-5Z,8Z,11Z,14Z-eicosatetraenoyl)-ethanolamine + H2O = 1-O-(1Z-octadecenyl)-sn-glycero-3-phosphate + N-(5Z,8Z,11Z,14Z-eicosatetraenoyl)-ethanolamine + H(+). It catalyses the reaction 1-O-(1Z-octadecenyl)-sn-glycero-3-phospho-(N-9Z-octadecenoyl)-ethanolamine + H2O = 1-O-(1Z-octadecenyl)-sn-glycero-3-phosphate + N-(9Z-octadecenoyl) ethanolamine + H(+). The catalysed reaction is 1-O-(1Z-octadecenyl)-sn-glycero-3-phospho-N-hexadecanoyl-ethanolamine + H2O = 1-O-(1Z-octadecenyl)-sn-glycero-3-phosphate + N-hexadecanoylethanolamine + H(+). Its activity is regulated as follows. Lysophospholipase D activity is increased by magnesium and manganese and inhibited by calcium in a concentration dependent manner. Loss of lysophospholipase D activity by addition of EDTA. Functionally, hydrolyzes lysoglycerophospholipids to produce lysophosphatidic acid (LPA) and the corresponding amines. Shows a preference for 1-O-alkyl-sn-glycero-3-phosphocholine (lyso-PAF), lysophosphatidylethanolamine (lyso-PE) and lysophosphatidylcholine (lyso-PC). May be involved in bioactive N-acylethanolamine biosynthesis from both N-acyl-lysoplasmenylethanolamin (N-acyl-lysoPlsEt) and N-acyl-lysophosphatidylethanolamin (N-acyl-lysoPE). In addition, hydrolyzes glycerophospho-N-acylethanolamine to N-acylethanolamine. Does not display glycerophosphodiester phosphodiesterase activity, since it cannot hydrolyze either glycerophosphoinositol or glycerophosphocholine. In Rattus norvegicus (Rat), this protein is Lysophospholipase D GDPD1.